A 523-amino-acid chain; its full sequence is Probable malate:quinone oxidoreductase 1 (523 aa).

It belongs to the MQO family. It depends on FAD as a cofactor.

It carries out the reaction (S)-malate + a quinone = a quinol + oxaloacetate. It functions in the pathway carbohydrate metabolism; tricarboxylic acid cycle; oxaloacetate from (S)-malate (quinone route): step 1/1. The sequence is that of Probable malate:quinone oxidoreductase 1 from Pseudomonas aeruginosa (strain ATCC 15692 / DSM 22644 / CIP 104116 / JCM 14847 / LMG 12228 / 1C / PRS 101 / PAO1).